A 102-amino-acid polypeptide reads, in one-letter code: Large ribosomal subunit protein bL21 (102 aa).

This sequence belongs to the bacterial ribosomal protein bL21 family. In terms of assembly, part of the 50S ribosomal subunit. Contacts protein L20.

In terms of biological role, this protein binds to 23S rRNA in the presence of protein L20. This chain is Large ribosomal subunit protein bL21, found in Desulfovibrio desulfuricans (strain ATCC 27774 / DSM 6949 / MB).